The chain runs to 1363 residues: Spike glycoprotein (1363 aa).

The first 13 residues, 1 to 13, serve as a signal peptide directing secretion; sequence MFLILLISLPMAF. Topologically, residues 14 to 1307 are extracellular; that stretch reads AVIGDLKCTT…GTYEYYVKWP (1294 aa). One can recognise a BetaCoV S1-NTD domain in the interval 15–298; the sequence is VIGDLKCTTV…DFMSEIKCKT (284 aa). 5 disulfides stabilise this stretch: Cys-21-Cys-165, Cys-160-Cys-193, Cys-172-Cys-252, Cys-286-Cys-296, and Cys-331-Cys-356. N-linked (GlcNAc...) asparagine; by host glycosylation is found at Asn-59 and Asn-133. Residue Asn-198 is glycosylated (N-linked (GlcNAc...) asparagine; by host). A BetaCoV S1-CTD domain is found at 329–617; sequence PDCNIEAWLN…DVNSGTTCST (289 aa). The N-linked (GlcNAc...) asparagine; by host glycan is linked to Asn-359. 2 cysteine pairs are disulfide-bonded: Cys-374-Cys-427 and Cys-386-Cys-615. Asn-437, Asn-649, Asn-676, Asn-696, Asn-714, Asn-739, and Asn-788 each carry an N-linked (GlcNAc...) asparagine; by host glycan. 2 fusion peptide regions span residues 914–935 and 933–953; these read SAIEDLLFSKVKLSDVGFVEAY and EAYNNCTGGAEIRDLICVQSY. N-linked (GlcNAc...) asparagine; by host glycosylation is present at Asn-937. A disulfide bond links Cys-938 and Cys-949. The tract at residues 1014–1064 is heptad repeat 1; sequence QKLIANAFNNALDAIQEGFDATNSALVKIQAVVNANAEALNNLLQQLSNRF. The stretch at 1043–1087 forms a coiled coil; that stretch reads QAVVNANAEALNNLLQQLSNRFGAISSSLQEILSRLDALEAQAQI. Asn-1194, Asn-1224, Asn-1234, Asn-1253, Asn-1267, and Asn-1288 each carry an N-linked (GlcNAc...) asparagine; by host glycan. The interval 1258-1296 is heptad repeat 2; it reads APDLSLDYINVTFLDLQDEMNRLQEAIKVLNQSYINLKD. A coiled-coil region spans residues 1269-1297; the sequence is TFLDLQDEMNRLQEAIKVLNQSYINLKDI. Residues 1308 to 1328 traverse the membrane as a helical segment; sequence WYVWLLIGFAGVAMLVLLFFI. The Cytoplasmic portion of the chain corresponds to 1329 to 1363; that stretch reads CCCTGCGTSCFKICGGCCDDYTGHQELVIKTSHDD. Residues 1359–1363 carry the KxHxx motif; sequence TSHDD.

Belongs to the betacoronaviruses spike protein family. In terms of assembly, homotrimer; each monomer consists of a S1 and a S2 subunit. The resulting peplomers protrude from the virus surface as spikes. In terms of processing, specific enzymatic cleavages in vivo yield mature proteins. The precursor is processed into S1 and S2 by host cell furin or another cellular protease to yield the mature S1 and S2 proteins. Additionally, a second cleavage leads to the release of a fusion peptide after viral attachment to host cell receptor. Post-translationally, the cytoplasmic Cys-rich domain is palmitoylated. Spike glycoprotein is digested within host endosomes.

The protein localises to the virion membrane. It localises to the host endoplasmic reticulum-Golgi intermediate compartment membrane. The protein resides in the host cell membrane. Functionally, attaches the virion to the cell membrane by interacting with host receptor, initiating the infection. In terms of biological role, mediates fusion of the virion and cellular membranes by acting as a class I viral fusion protein. Under the current model, the protein has at least three conformational states: pre-fusion native state, pre-hairpin intermediate state, and post-fusion hairpin state. During viral and target cell membrane fusion, the coiled coil regions (heptad repeats) assume a trimer-of-hairpins structure, positioning the fusion peptide in close proximity to the C-terminal region of the ectodomain. The formation of this structure appears to drive apposition and subsequent fusion of viral and target cell membranes. Acts as a viral fusion peptide which is unmasked following S2 cleavage occurring upon virus endocytosis. This Bos taurus (Bovine) protein is Spike glycoprotein.